Consider the following 329-residue polypeptide: Beta-ketoacyl-[acyl-carrier-protein] synthase III (329 aa).

Catalysis depends on residues Cys113 and His255. The ACP-binding stretch occupies residues 256-260 (QANQR). The active site involves Asn285.

It belongs to the thiolase-like superfamily. FabH family. In terms of assembly, homodimer.

Its subcellular location is the cytoplasm. The enzyme catalyses malonyl-[ACP] + acetyl-CoA + H(+) = 3-oxobutanoyl-[ACP] + CO2 + CoA. It functions in the pathway lipid metabolism; fatty acid biosynthesis. Catalyzes the condensation reaction of fatty acid synthesis by the addition to an acyl acceptor of two carbons from malonyl-ACP. Catalyzes the first condensation reaction which initiates fatty acid synthesis and may therefore play a role in governing the total rate of fatty acid production. Possesses both acetoacetyl-ACP synthase and acetyl transacylase activities. Its substrate specificity determines the biosynthesis of branched-chain and/or straight-chain of fatty acids. The polypeptide is Beta-ketoacyl-[acyl-carrier-protein] synthase III (Chlorobium luteolum (strain DSM 273 / BCRC 81028 / 2530) (Pelodictyon luteolum)).